We begin with the raw amino-acid sequence, 232 residues long: ATP synthase subunit a (232 aa).

The next 6 membrane-spanning stretches (helical) occupy residues 18–38 (LLFI…IAFI), 74–94 (WAGL…LGLF), 107–127 (TYSL…YLAF), 142–162 (ALIP…PIAL), 173–193 (GHLL…SLMV), and 195–215 (SIPI…VACI).

This sequence belongs to the ATPase A chain family. F-type ATPases have 2 components, CF(1) - the catalytic core - and CF(0) - the membrane proton channel. CF(1) has five subunits: alpha(3), beta(3), gamma(1), delta(1), epsilon(1). CF(0) has three main subunits: a, b and c.

It is found in the mitochondrion inner membrane. Mitochondrial membrane ATP synthase (F(1)F(0) ATP synthase or Complex V) produces ATP from ADP in the presence of a proton gradient across the membrane which is generated by electron transport complexes of the respiratory chain. F-type ATPases consist of two structural domains, F(1) - containing the extramembraneous catalytic core and F(0) - containing the membrane proton channel, linked together by a central stalk and a peripheral stalk. During catalysis, ATP synthesis in the catalytic domain of F(1) is coupled via a rotary mechanism of the central stalk subunits to proton translocation. Key component of the proton channel; it may play a direct role in the translocation of protons across the membrane. The chain is ATP synthase subunit a (ATP6) from Paracentrotus lividus (Common sea urchin).